The sequence spans 213 residues: Na(+)-translocating NADH-quinone reductase subunit D (213 aa).

6 helical membrane passes run 21–41 (PLIAILGICSALAVTTTVKTA), 42–62 (ITMGLAVSFVTGCSSFFVSLL), 77–97 (IIISLFVIVIDQFLKAFFFNI), 101–121 (LSVFVGLIITNCIVMGRAESL), 131–151 (FLDGLASGLGYGWVLVFVSII), and 183–203 (FGLMVLAPSAFFLLGIMIWVV).

The protein belongs to the NqrDE/RnfAE family. In terms of assembly, composed of six subunits; NqrA, NqrB, NqrC, NqrD, NqrE and NqrF.

The protein localises to the cell inner membrane. The enzyme catalyses a ubiquinone + n Na(+)(in) + NADH + H(+) = a ubiquinol + n Na(+)(out) + NAD(+). Functionally, NQR complex catalyzes the reduction of ubiquinone-1 to ubiquinol by two successive reactions, coupled with the transport of Na(+) ions from the cytoplasm to the periplasm. NqrA to NqrE are probably involved in the second step, the conversion of ubisemiquinone to ubiquinol. The chain is Na(+)-translocating NADH-quinone reductase subunit D from Chlamydia felis (strain Fe/C-56) (Chlamydophila felis).